We begin with the raw amino-acid sequence, 307 residues long: Universal stress protein A family protein C25B2.10 (307 aa).

The tract at residues 1 to 63 is disordered; the sequence is MSESAPAGSK…RSSMEQPTFR (63 aa). Over residues 21–30 the composition is skewed to basic and acidic residues; the sequence is PEPRTSKDQQ. Ser-44 is modified (phosphoserine). Thr-48 is modified (phosphothreonine). Phosphoserine occurs at positions 98 and 102.

It belongs to the universal stress protein A family.

It is found in the barrier septum. The protein resides in the cell tip. This is Universal stress protein A family protein C25B2.10 from Schizosaccharomyces pombe (strain 972 / ATCC 24843) (Fission yeast).